The sequence spans 366 residues: Histone-lysine N-methyltransferase SETD7 (366 aa).

MORN repeat units lie at residues 36 to 58, 59 to 81, and 106 to 128; these read FEGNFVHGEKNGRGKFFFFDGST, LEGYYVDDALQGQGVYTYEDGGV, and FKGQYKDNNRHGVCWIHYPDGGS. Positions 214 to 336 constitute an SET domain; it reads ERVYVADSLI…AEEELTVAYG (123 aa). Residues 226–228, Asn-296, His-297, and Glu-356 each bind S-adenosyl-L-methionine; that span reads AGE.

The protein belongs to the class V-like SAM-binding methyltransferase superfamily. Histone-lysine methyltransferase family. SET7 subfamily. As to quaternary structure, interacts with IPF1/PDX-1.

Its subcellular location is the nucleus. The protein localises to the chromosome. It catalyses the reaction L-lysyl(4)-[histone H3] + S-adenosyl-L-methionine = N(6)-methyl-L-lysyl(4)-[histone H3] + S-adenosyl-L-homocysteine + H(+). The enzyme catalyses L-lysyl-[protein] + S-adenosyl-L-methionine = N(6)-methyl-L-lysyl-[protein] + S-adenosyl-L-homocysteine + H(+). Functionally, histone methyltransferase that specifically monomethylates 'Lys-4' of histone H3. H3 'Lys-4' methylation represents a specific tag for epigenetic transcriptional activation. Plays a central role in the transcriptional activation of genes such as collagenase or insulin. Recruited by IPF1/PDX-1 to the insulin promoter, leading to activate transcription. Also has methyltransferase activity toward non-histone proteins such as CGAS, p53/TP53, TAF10, and possibly TAF7 by recognizing and binding the [KR]-[STA]-K in substrate proteins. Monomethylates 'Lys-189' of TAF10, leading to increase the affinity of TAF10 for RNA polymerase II. Monomethylates 'Lys-372' of p53/TP53, stabilizing p53/TP53 and increasing p53/TP53-mediated transcriptional activation. Monomethylates 'Lys-491' of CGAS, promoting interaction between SGF29 and CGAS. This chain is Histone-lysine N-methyltransferase SETD7 (Setd7), found in Mus musculus (Mouse).